Here is a 546-residue protein sequence, read N- to C-terminus: Chaperonin GroEL (546 aa).

ATP contacts are provided by residues 30–33, Lys51, 87–91, Gly415, 479–481, and Asp495; these read TLGP, DGTTT, and NAA.

The protein belongs to the chaperonin (HSP60) family. Forms a cylinder of 14 subunits composed of two heptameric rings stacked back-to-back. Interacts with the co-chaperonin GroES.

It is found in the cytoplasm. The enzyme catalyses ATP + H2O + a folded polypeptide = ADP + phosphate + an unfolded polypeptide.. Functionally, together with its co-chaperonin GroES, plays an essential role in assisting protein folding. The GroEL-GroES system forms a nano-cage that allows encapsulation of the non-native substrate proteins and provides a physical environment optimized to promote and accelerate protein folding. This Stutzerimonas stutzeri (strain A1501) (Pseudomonas stutzeri) protein is Chaperonin GroEL.